Consider the following 423-residue polypeptide: F-box/LRR-repeat protein 2 (423 aa).

Residues 9–55 (GLINKKLPKELLLRIFSFLDIVTLCRCAQISKAWNILALDGSNWQRV) form the F-box domain. LRR repeat units lie at residues 61–87 (QTDVEGRVVENISKRCGGFLRKLSLRG), 88–113 (CIGVGDSSLKTFAQNCRNIEHLNLNG), 114–139 (CTKITDSTCYSLSRFCSKLKHLDLTS), 140–165 (CVSVTNSSLKGISEGCRNLEYLNLSW), 166–191 (CDQITKEGIEALVRGCRGLKALLLRG), 192–217 (CTQLEDEALKHIQNHCHELVSLNLQS), 218–243 (CSRITDDGVVQICRGCHRLQALCLSG), 244–269 (CSNLTDASLTALGLNCPRLQVLEAAR), 270–295 (CSHLTDAGFTLLARNCHELEKMDLEE), 296–321 (CVLITDSTLVQLSIHCPKLQALSLSH), 322–350 (CELITDEGILHLSSSTCGHERLRVLELDN), 351–375 (CLLVTDASLEHLENCRGLERLELYD), and 376–401 (CQQVTRAGIKRMRAQLPHVKVHAYFA). The interaction with Calmodulin stretch occupies residues 80–90 (LRKLSLRGCIG). Residue K201 forms a Glycyl lysine isopeptide (Lys-Gly) (interchain with G-Cter in ubiquitin) linkage. Position 404 is a phosphothreonine; by GSK3-beta (T404). A lipid anchor (S-geranylgeranyl cysteine) is attached at C420. A CAAX motif motif is present at residues 420-423 (CVIL).

As to quaternary structure, part of the SCF (SKP1-CUL1-F-box) E3 ubiquitin-protein ligase complex SCF(FBXL2) composed of CUL1, SKP1, RBX1 and FBXL2. Interacts with calmodulin; may antagonize substrate ubiquitination by SCF(FBXL2). May interact with PIK3R1. Interacts with PTPN13. Post-translationally, phosphorylated by GSK-beta (GSK3B), promoting recognition by FBXO3, leading to its ubiquitination by the SCF(FBXO3) complex. In terms of processing, ubiquitinated at Lys-201 by the SCF(FBXO3) complex in response to lipopolysaccharide (LPS), leading to its degradation by the proteasome.

It is found in the membrane. It functions in the pathway protein modification; protein ubiquitination. Functionally, calcium-activated substrate recognition component of the SCF (SKP1-cullin-F-box protein) E3 ubiquitin-protein ligase complex, SCF(FBXL2), which mediates the ubiquitination and subsequent proteasomal degradation of target proteins. Unlike many F-box proteins, FBXL2 does not seem to target phosphodegron within its substrates but rather calmodulin-binding motifs and is thereby antagonized by calmodulin. This is the case for the cyclins CCND2 and CCND3 which polyubiquitination and subsequent degradation are inhibited by calmodulin. Through CCND2 and CCND3 degradation induces cell-cycle arrest in G(0). SCF(FBXL2) also mediates PIK3R2 ubiquitination and proteasomal degradation thereby regulating phosphatidylinositol 3-kinase signaling and autophagy. PCYT1A monoubiquitination by SCF(FBXL2) and subsequent degradation regulates synthesis of phosphatidylcholine, which is utilized for formation of membranes and of pulmonary surfactant. The SCF(FBXL2) complex acts as a regulator of inflammation by mediating ubiquitination and degradation of TRAF proteins (TRAF1, TRAF2, TRAF3, TRAF4, TRAF5 and TRAF6). The SCF(FBXL2) complex acts as a negative regulator of the NLRP3 inflammasome by mediating ubiquitination and degradation of NLRP3. This is F-box/LRR-repeat protein 2 from Mus musculus (Mouse).